We begin with the raw amino-acid sequence, 147 residues long: Proteinase inhibitor type-2 T (147 aa).

The signal sequence occupies residues M1–A25. 2 repeat units span residues A25 to P82 and K83 to P142. Disulfide bonds link C28–C116, C32–C112, C40–C122, C52–C89, C55–C73, C56–C85, C62–C98, and C115–C133.

This sequence belongs to the protease inhibitor I20 (potato type II proteinase inhibitor) family.

Its function is as follows. Inhibitor of trypsin and chymotrypsin. The polypeptide is Proteinase inhibitor type-2 T (PIN2T) (Solanum tuberosum (Potato)).